A 306-amino-acid polypeptide reads, in one-letter code: D-alanine--D-alanine ligase B (306 aa).

Catalysis depends on residues glutamate 15 and serine 150. One can recognise an ATP-grasp domain in the interval lysine 101–glutamate 303. Position 134–189 (isoleucine 134–threonine 189) interacts with ATP. Aspartate 257, glutamate 270, and asparagine 272 together coordinate Mg(2+). Residue serine 281 is part of the active site.

This sequence belongs to the D-alanine--D-alanine ligase family. In terms of assembly, monomer. Mg(2+) is required as a cofactor. The cofactor is Mn(2+).

It is found in the cytoplasm. It catalyses the reaction 2 D-alanine + ATP = D-alanyl-D-alanine + ADP + phosphate + H(+). The protein operates within cell wall biogenesis; peptidoglycan biosynthesis. Functionally, cell wall formation. The sequence is that of D-alanine--D-alanine ligase B (ddlB) from Escherichia coli O157:H7.